The following is a 154-amino-acid chain: Phosphopantetheine adenylyltransferase (154 aa).

This sequence belongs to the eukaryotic CoaD family.

The protein resides in the cytoplasm. The enzyme catalyses (R)-4'-phosphopantetheine + ATP + H(+) = 3'-dephospho-CoA + diphosphate. It functions in the pathway cofactor biosynthesis; coenzyme A biosynthesis. Its function is as follows. Reversibly transfers an adenylyl group from ATP to 4'-phosphopantetheine, yielding dephospho-CoA (dPCoA) and pyrophosphate. In Methanosarcina mazei (strain ATCC BAA-159 / DSM 3647 / Goe1 / Go1 / JCM 11833 / OCM 88) (Methanosarcina frisia), this protein is Phosphopantetheine adenylyltransferase.